We begin with the raw amino-acid sequence, 342 residues long: MACFLNCVRFDVSKTITDKPTSQGSGVTCYNSWDDVETLTSNFSRLIGSGGYSSIYMARFSGSDKAALKVHVSSHRLYQVFRLELDILLRLQHPNIVKLLGYFDDSEENGALLLEYLPQGNLQEKLQSNSKQVLQWRNRVAIALQLVQAIEHIHEKCSPQIVHGDIKSSNVLLDKNFDCKLCDFGSAKVGFSSMVQPPTMSPRSRQVKMVGSPGYTDPHYLRTGIASKKMDMYGFGVVVLELVSGKEAFSAERGEMLVHIAAPLMNEILDSSVDISEDKVRQFLDPRLLRDSLDIDEVKTMLSVAAVCISSKLSLRPSAAQVADTLIKEIPSLSFLGCGKGV.

The Protein kinase domain occupies S41–L336. ATP-binding positions include I47–I55 and K69. Residue D165 is the Proton acceptor of the active site. A phosphoserine mark is found at S169 and S201. Phosphotyrosine is present on Y220.

This sequence belongs to the protein kinase superfamily. Ser/Thr protein kinase family.

It carries out the reaction L-seryl-[protein] + ATP = O-phospho-L-seryl-[protein] + ADP + H(+). It catalyses the reaction L-threonyl-[protein] + ATP = O-phospho-L-threonyl-[protein] + ADP + H(+). This chain is Probable receptor-like protein kinase At4g10390, found in Arabidopsis thaliana (Mouse-ear cress).